The chain runs to 313 residues: Olfactory receptor 1G1 (313 aa).

At 1-25 (MEGKNLTSISEFFLLGFSEQLEEQK) the chain is on the extracellular side. Residue Asn5 is glycosylated (N-linked (GlcNAc...) asparagine). The chain crosses the membrane as a helical span at residues 26 to 49 (ALFGSFLFMYLVTVAGNLLIILVI). The Cytoplasmic segment spans residues 50-57 (ITDTQLHT). A helical membrane pass occupies residues 58–79 (PMYFFLANLSLADACFVSTTVP). Residues 80–100 (KMLANIQIQSQAISYSGCLLQ) lie on the Extracellular side of the membrane. The cysteines at positions 97 and 189 are disulfide-linked. The helical transmembrane segment at 101 to 120 (LYFFMLFVMLEAFLLAVMAY) threads the bilayer. Over 121-140 (DRYVAICHPLHYILIMSPGL) the chain is Cytoplasmic. Residues 141–158 (CVFLVSASWIMNALHSLL) traverse the membrane as a helical segment. Residues 159-196 (HTLLMNSLSFCANHEIPHFFCDIDPLLSLSCTDPFTNE) lie on the Extracellular side of the membrane. A helical membrane pass occupies residues 197 to 219 (LVIFITGGLTGLVCVLCLIISYT). At 220–236 (NIFSTILKIPSAQGKRK) the chain is on the cytoplasmic side. The helical transmembrane segment at 237 to 259 (AFSTCGSHLSVVSLFFGTSFCVY) threads the bilayer. At 260 to 272 (FIPPSTRSAQKDT) the chain is on the extracellular side. The chain crosses the membrane as a helical span at residues 273–292 (VASVMYTVVTPMLNPFIYSL). The Cytoplasmic segment spans residues 293-313 (RNQEIKSSLRKLIWVREIHSP).

This sequence belongs to the G-protein coupled receptor 1 family.

It is found in the cell membrane. Odorant receptor. This is Olfactory receptor 1G1 (OR1G1) from Gorilla gorilla gorilla (Western lowland gorilla).